We begin with the raw amino-acid sequence, 84 residues long: Peptide Ctry2346 (84 aa).

The first 23 residues, 1–23, serve as a signal peptide directing secretion; it reads MKTQTLLFTFSLVLLMVATQTEA. Leu33 bears the Leucine amide mark. Positions 37–84 are excised as a propeptide; the sequence is GLLDNLLGKRGLLFGKRALTNQDLFDLAYDPSLSAADMDALEMLLENY.

This sequence belongs to the non-disulfide-bridged peptide (NDBP) superfamily. Short antimicrobial peptide (group 4) family. In terms of tissue distribution, expressed by the venom gland.

The protein localises to the secreted. Its subcellular location is the target cell membrane. Its function is as follows. Antimicrobial peptide. The protein is Peptide Ctry2346 of Chaerilus tryznai (Scorpion).